Consider the following 916-residue polypeptide: Translation initiation factor IF-2 (916 aa).

The disordered stretch occupies residues 1–325 (MTDSNDDKTL…QEKFRRSQVQ (325 aa)). The segment covering 60-91 (ITPATPAAPVRAAEPAPAPAQARPQQSTPAPR) has biased composition (low complexity). Polar residues predominate over residues 97–108 (GQANQRPQQSYQ). Basic and acidic residues predominate over residues 125 to 182 (SPEEMDARRRALAESQARDAQDAIRRAEEEKRRAAEEAVRKAAEAEEAARRAVEEAAR). 2 stretches are compositionally biased toward low complexity: residues 183-209 (QAEAAAAAAAEPAVTAPAPAPVTAEAR) and 229-243 (DGAAARPAPGAPAAV). One can recognise a tr-type G domain in the interval 414-581 (SRPPVVTIMG…AVLLQAEILD (168 aa)). The interval 423–430 (GHVDHGKT) is G1. Residue 423–430 (GHVDHGKT) participates in GTP binding. Residues 448 to 452 (GITQH) form a G2 region. The tract at residues 469-472 (DTPG) is G3. GTP contacts are provided by residues 469–473 (DTPGH) and 523–526 (NKID). Residues 523-526 (NKID) form a G4 region. A G5 region spans residues 559-561 (SAK).

Belongs to the TRAFAC class translation factor GTPase superfamily. Classic translation factor GTPase family. IF-2 subfamily.

Its subcellular location is the cytoplasm. In terms of biological role, one of the essential components for the initiation of protein synthesis. Protects formylmethionyl-tRNA from spontaneous hydrolysis and promotes its binding to the 30S ribosomal subunits. Also involved in the hydrolysis of GTP during the formation of the 70S ribosomal complex. In Rhizobium etli (strain ATCC 51251 / DSM 11541 / JCM 21823 / NBRC 15573 / CFN 42), this protein is Translation initiation factor IF-2.